Reading from the N-terminus, the 178-residue chain is Large ribosomal subunit protein bL17 (178 aa).

Composition is skewed to low complexity over residues 123 to 139 (KAPA…NTAT) and 151 to 160 (EDAAAQAPVA). Residues 123–178 (KAPASAADAKAQINTATEAKEAEPEAPAEDAAAQAPVADEQKAAEVDEKAEEKPEA) are disordered. Residues 161–178 (DEQKAAEVDEKAEEKPEA) are compositionally biased toward basic and acidic residues.

The protein belongs to the bacterial ribosomal protein bL17 family. As to quaternary structure, part of the 50S ribosomal subunit. Contacts protein L32.

This chain is Large ribosomal subunit protein bL17, found in Cutibacterium acnes (strain DSM 16379 / KPA171202) (Propionibacterium acnes).